Reading from the N-terminus, the 477-residue chain is ACT domain-containing protein ACR1 (477 aa).

4 ACT domains span residues 38 to 124 (LIKV…REVQ), 134 to 214 (AFEI…GDVS), 283 to 358 (MVNV…RASQ), and 361 to 441 (KLEI…MMPR). The Bipartite nuclear localization signal signature appears at 329–345 (KKNGGTLETEGQRERLR).

As to expression, expressed in flowers and siliques.

The protein resides in the nucleus. In terms of biological role, may bind amino acids. The polypeptide is ACT domain-containing protein ACR1 (Arabidopsis thaliana (Mouse-ear cress)).